The following is a 118-amino-acid chain: Basic phospholipase A2 CM-III (118 aa).

Cystine bridges form between C11–C70, C26–C117, C28–C44, C43–C98, C50–C91, C59–C84, and C77–C89. Residues Y27, G29, and G31 each contribute to the Ca(2+) site. The active site involves H47. D48 provides a ligand contact to Ca(2+). The Coagulation factor Xa binding motif signature appears at 52 to 69; sequence EKAGKMGCWPYFTLYKYK. Residue D92 is part of the active site.

Belongs to the phospholipase A2 family. Group I subfamily. D49 sub-subfamily. It depends on Ca(2+) as a cofactor. Expressed by the venom gland.

The protein localises to the secreted. It catalyses the reaction a 1,2-diacyl-sn-glycero-3-phosphocholine + H2O = a 1-acyl-sn-glycero-3-phosphocholine + a fatty acid + H(+). In terms of biological role, snake venom phospholipase A2 (PLA2) that shows several activities. It shows strong anticoagulant activity, probably by binding to coagulation factor Xa (F10) and inhibiting the formation of the prothrombinase complex, shows direct hemolytic action, causes neuromuscular blockade with a gradual contracture and a decreased sensitivity to ACh and KCl, abolishes twitches evoked by indirect stimulation earlier than those by direct stimulation (in the mouse phrenic nerve-diaphragm preparation), and causes myonecrosis when injected intramuscularly. PLA2 catalyzes the calcium-dependent hydrolysis of the 2-acyl groups in 3-sn-phosphoglycerides. The chain is Basic phospholipase A2 CM-III from Naja mossambica (Mozambique spitting cobra).